We begin with the raw amino-acid sequence, 531 residues long: Conglutin beta 1 (531 aa).

The first 30 residues, 1-30, serve as a signal peptide directing secretion; sequence MGKMRVRFPTLVLVLGIVFLMAVSIGIAYG. A propeptide spanning residues 31–108 is cleaved from the precursor; it reads EKDVLKSHER…EQQQGSPSYS (78 aa). Basic and acidic residues-rich tracts occupy residues 37–51 and 79–99; these read SHER…EWQP and SGYE…REQE. Disordered stretches follow at residues 37–124, 283–302, and 314–337; these read SHER…RFQT, QEYE…EGVI, and TKYA…LRSN. One can recognise a Cupin type-1 1 domain in the interval 115-273; the sequence is YHFNSQRFQT…TFNTRYEEIQ (159 aa). Over residues 286 to 302 the composition is skewed to basic and acidic residues; sequence EEQRRGQEQSHQDEGVI. A compositionally biased stretch (polar residues) spans 316–337; it reads YAQSSSGKDKPSQSGPFNLRSN. The Cupin type-1 2 domain maps to 332 to 494; it reads FNLRSNEPIY…TFPGSAEDIE (163 aa). An N-linked (GlcNAc...) asparagine glycan is attached at N444. A disordered region spans residues 508-531; it reads ALPQQQQQSEKEGRRGRRGPISSI.

The protein belongs to the 7S seed storage protein family.

Seed storage protein. Accumulates during seed development and is hydrolyzed after germination to provide a carbon and nitrogen source for the developing seedling. In terms of biological role, has a lectin-like activity. This chain is Conglutin beta 1, found in Lupinus albus (White lupine).